A 443-amino-acid polypeptide reads, in one-letter code: Threonine/serine transporter TdcC (443 aa).

11 helical membrane passes run 22–42 (TTWT…FFPI), 44–64 (AGFG…PIAF), 97–117 (GVVI…IYGV), 140–160 (FVAL…KDLM), 163–183 (VMSY…LSLI), 207–227 (ILIT…FSPI), 261–281 (MLMV…LSPA), 312–332 (AITL…KSFF), 366–386 (ISMI…PNIL), 389–409 (IEAM…MYAI), and 423–443 (DNVF…YKLF).

The protein belongs to the amino acid/polyamine transporter 2 family. SdaC/TdcC subfamily.

It is found in the cell inner membrane. It catalyses the reaction L-threonine(in) + H(+)(in) = L-threonine(out) + H(+)(out). The catalysed reaction is L-serine(in) + H(+)(in) = L-serine(out) + H(+)(out). In terms of biological role, involved in the import of threonine and serine into the cell, with the concomitant import of a proton (symport system). In Escherichia coli O45:K1 (strain S88 / ExPEC), this protein is Threonine/serine transporter TdcC.